A 200-amino-acid chain; its full sequence is NAD(P)H dehydrogenase (quinone) (200 aa).

One can recognise a Flavodoxin-like domain in the interval 4–190 (VLVLYYSTYG…EGARFQGRHV (187 aa)). FMN is bound by residues 10 to 15 (STYGHV) and 78 to 80 (TRY). NAD(+) is bound at residue Y12. W98 lines the substrate pocket. Residues 113-119 (STASQHG) and H134 contribute to the FMN site.

This sequence belongs to the WrbA family. FMN serves as cofactor.

The catalysed reaction is a quinone + NADH + H(+) = a quinol + NAD(+). The enzyme catalyses a quinone + NADPH + H(+) = a quinol + NADP(+). The polypeptide is NAD(P)H dehydrogenase (quinone) (Methylobacterium radiotolerans (strain ATCC 27329 / DSM 1819 / JCM 2831 / NBRC 15690 / NCIMB 10815 / 0-1)).